Here is a 301-residue protein sequence, read N- to C-terminus: Putative glycosyltransferase MJ1113 (301 aa).

Transmembrane regions (helical) follow at residues 2–22 (GHYF…SAVL), 62–82 (FIPF…IIGI), 95–115 (LILL…NSYV), 117–137 (LIEI…TNML), 140–160 (FNGL…LVLF), 164–184 (YTTG…LLIF), 191–211 (VFPG…LAVV), and 280–300 (VTVL…ISLI).

The protein belongs to the glycosyltransferase 4 family.

The protein resides in the cell membrane. In Methanocaldococcus jannaschii (strain ATCC 43067 / DSM 2661 / JAL-1 / JCM 10045 / NBRC 100440) (Methanococcus jannaschii), this protein is Putative glycosyltransferase MJ1113.